Here is a 329-residue protein sequence, read N- to C-terminus: MNKSLETLAGRIIAGEQLSVEESIALSASSGTDAFALFLAASRVKEHFLGNGVDLCSIINAKSGRCPENCAFCAQSAHHTTNAPIYPLVDEDKLVACAKEAEAAGSRCYGIITSGTTIKKGEELDRICRAVRRIRETTSIAPSCSLGIIDHETAVTLREAGVETYHHNLETSRSFFPHICTTHDYEEDVETVRVAKQAGLTICCGGIFGLGETAAQRVELAMTLRELDVDSVPLNFLNPIEGTRLAGSKLISPLECLKTIALFRLILPTKKIAVCGGREQNLRDLQSWIFFAGASGTMIGNYLTTTGRPAEQDWQMLRDLELAVGGCCE.

Positions 48–278 constitute a Radical SAM core domain; it reads FLGNGVDLCS…TKKIAVCGGR (231 aa). [4Fe-4S] cluster contacts are provided by Cys-66, Cys-70, and Cys-73. Ser-143 and Cys-203 together coordinate [2Fe-2S] cluster.

This sequence belongs to the radical SAM superfamily. Biotin synthase family. As to quaternary structure, homodimer. [4Fe-4S] cluster is required as a cofactor. The cofactor is [2Fe-2S] cluster.

The catalysed reaction is (4R,5S)-dethiobiotin + (sulfur carrier)-SH + 2 reduced [2Fe-2S]-[ferredoxin] + 2 S-adenosyl-L-methionine = (sulfur carrier)-H + biotin + 2 5'-deoxyadenosine + 2 L-methionine + 2 oxidized [2Fe-2S]-[ferredoxin]. The protein operates within cofactor biosynthesis; biotin biosynthesis; biotin from 7,8-diaminononanoate: step 2/2. Its function is as follows. Catalyzes the conversion of dethiobiotin (DTB) to biotin by the insertion of a sulfur atom into dethiobiotin via a radical-based mechanism. The chain is Biotin synthase from Geobacter metallireducens (strain ATCC 53774 / DSM 7210 / GS-15).